The sequence spans 191 residues: Leucyl/phenylalanyl-tRNA--protein transferase (191 aa).

Belongs to the L/F-transferase family.

The protein resides in the cytoplasm. It carries out the reaction N-terminal L-lysyl-[protein] + L-leucyl-tRNA(Leu) = N-terminal L-leucyl-L-lysyl-[protein] + tRNA(Leu) + H(+). The catalysed reaction is N-terminal L-arginyl-[protein] + L-leucyl-tRNA(Leu) = N-terminal L-leucyl-L-arginyl-[protein] + tRNA(Leu) + H(+). The enzyme catalyses L-phenylalanyl-tRNA(Phe) + an N-terminal L-alpha-aminoacyl-[protein] = an N-terminal L-phenylalanyl-L-alpha-aminoacyl-[protein] + tRNA(Phe). In terms of biological role, functions in the N-end rule pathway of protein degradation where it conjugates Leu, Phe and, less efficiently, Met from aminoacyl-tRNAs to the N-termini of proteins containing an N-terminal arginine or lysine. In Herpetosiphon aurantiacus (strain ATCC 23779 / DSM 785 / 114-95), this protein is Leucyl/phenylalanyl-tRNA--protein transferase.